Reading from the N-terminus, the 305-residue chain is Ribonuclease BN (305 aa).

7 residues coordinate Zn(2+): His-64, His-66, Asp-68, His-69, His-141, Asp-212, and His-270. Asp-68 acts as the Proton acceptor in catalysis.

This sequence belongs to the RNase Z family. RNase BN subfamily. Homodimer. The cofactor is Zn(2+).

In terms of biological role, zinc phosphodiesterase, which has both exoribonuclease and endoribonuclease activities. The chain is Ribonuclease BN from Salmonella paratyphi C (strain RKS4594).